The following is a 315-amino-acid chain: Cytochrome c biogenesis protein CcsA (315 aa).

7 consecutive transmembrane segments (helical) span residues 17–37 (LGFA…WAVA), 72–92 (ISNL…AQLF), 101–121 (IVSA…SFVL), 146–166 (VIMC…GVFL), 221–241 (SITA…VWAN), 255–272 (TWAL…HTRI), and 282–302 (AILA…VNLL).

Belongs to the CcmF/CycK/Ccl1/NrfE/CcsA family. As to quaternary structure, may interact with ccs1.

Its subcellular location is the cellular thylakoid membrane. In terms of biological role, required during biogenesis of c-type cytochromes (cytochrome c6 and cytochrome f) at the step of heme attachment. This Prochlorococcus marinus (strain NATL2A) protein is Cytochrome c biogenesis protein CcsA.